The primary structure comprises 535 residues: uncharacterized protein (535 aa).

6 helical membrane passes run 55-75, 82-102, 115-135, 143-163, 201-221, and 346-366; these read LITI…IPII, FMPV…IMFV, IICF…ILRH, AFVL…LMLF, STIL…TLIM, and VSGP…NVFA.

The protein localises to the membrane. This is an uncharacterized protein from Schizosaccharomyces pombe (strain 972 / ATCC 24843) (Fission yeast).